Consider the following 466-residue polypeptide: Cysteine--tRNA ligase 1 (466 aa).

Position 27 (Cys27) interacts with Zn(2+). The 'HIGH' region motif lies at Pro29–His39. The Zn(2+) site is built by Cys211, His236, and Glu240. A 'KMSKS' region motif is present at residues Lys267–Ser271. Lys270 contributes to the ATP binding site.

This sequence belongs to the class-I aminoacyl-tRNA synthetase family. Monomer. The cofactor is Zn(2+).

It is found in the cytoplasm. The catalysed reaction is tRNA(Cys) + L-cysteine + ATP = L-cysteinyl-tRNA(Cys) + AMP + diphosphate. The sequence is that of Cysteine--tRNA ligase 1 from Tropheryma whipplei (strain TW08/27) (Whipple's bacillus).